The chain runs to 363 residues: GTPase Obg (363 aa).

In terms of domain architecture, Obg spans 1-159; the sequence is MKFLDEAKVY…KTIWLRLKLI (159 aa). Positions 160-327 constitute an OBG-type G domain; it reads ADAGLVGLPN…VLRALRDIIV (168 aa). GTP contacts are provided by residues 166–173, 191–195, 212–215, 279–282, and 308–310; these read GLPNAGKS, FTTLH, DIPG, SQID, and SAV. Mg(2+)-binding residues include Ser173 and Thr193. The segment at 332-363 is disordered; sequence EEKPAKAPKLRHRDMIVSEENNQGEDGADDQP. Positions 353–363 are enriched in acidic residues; sequence NQGEDGADDQP.

Belongs to the TRAFAC class OBG-HflX-like GTPase superfamily. OBG GTPase family. As to quaternary structure, monomer. Requires Mg(2+) as cofactor.

The protein localises to the cytoplasm. Functionally, an essential GTPase which binds GTP, GDP and possibly (p)ppGpp with moderate affinity, with high nucleotide exchange rates and a fairly low GTP hydrolysis rate. Plays a role in control of the cell cycle, stress response, ribosome biogenesis and in those bacteria that undergo differentiation, in morphogenesis control. The protein is GTPase Obg of Rhizobium etli (strain ATCC 51251 / DSM 11541 / JCM 21823 / NBRC 15573 / CFN 42).